Reading from the N-terminus, the 156-residue chain is 6,7-dimethyl-8-ribityllumazine synthase (156 aa).

Residues Phe-23, 57–59 (AFE), and 81–83 (AVI) each bind 5-amino-6-(D-ribitylamino)uracil. Residue 86 to 87 (ST) participates in (2S)-2-hydroxy-3-oxobutyl phosphate binding. The active-site Proton donor is the His-89. Phe-114 is a binding site for 5-amino-6-(D-ribitylamino)uracil. Arg-128 serves as a coordination point for (2S)-2-hydroxy-3-oxobutyl phosphate.

Belongs to the DMRL synthase family.

It carries out the reaction (2S)-2-hydroxy-3-oxobutyl phosphate + 5-amino-6-(D-ribitylamino)uracil = 6,7-dimethyl-8-(1-D-ribityl)lumazine + phosphate + 2 H2O + H(+). It functions in the pathway cofactor biosynthesis; riboflavin biosynthesis; riboflavin from 2-hydroxy-3-oxobutyl phosphate and 5-amino-6-(D-ribitylamino)uracil: step 1/2. Functionally, catalyzes the formation of 6,7-dimethyl-8-ribityllumazine by condensation of 5-amino-6-(D-ribitylamino)uracil with 3,4-dihydroxy-2-butanone 4-phosphate. This is the penultimate step in the biosynthesis of riboflavin. This chain is 6,7-dimethyl-8-ribityllumazine synthase, found in Brachyspira hyodysenteriae (strain ATCC 49526 / WA1).